Here is a 189-residue protein sequence, read N- to C-terminus: Selenoprotein S (189 aa).

The chain crosses the membrane as a helical span at residues 29 to 49 (VVLSSYGWYILLGCILIYLLI). Positions 114-125 (IETWDRMKEGKS) are enriched in basic and acidic residues. Residues 114–189 (IETWDRMKEG…RRGPSSGGUG (76 aa)) are disordered. The segment covering 136–147 (PSPSTSTSAATK) has biased composition (low complexity). Over residues 148 to 157 (PKQEKQERKT) the composition is skewed to basic and acidic residues. A non-standard amino acid (selenocysteine) is located at residue U188.

It belongs to the selenoprotein S family.

It is found in the endoplasmic reticulum membrane. It localises to the cytoplasm. Functionally, involved in the degradation process of misfolded endoplasmic reticulum (ER) luminal proteins. Participates in the transfer of misfolded proteins from the ER to the cytosol, where they are destroyed by the proteasome in a ubiquitin-dependent manner. This chain is Selenoprotein S (vimp), found in Xenopus tropicalis (Western clawed frog).